Consider the following 451-residue polypeptide: AP-3 complex subunit mu (451 aa).

The 260-residue stretch at 191-450 (NNEIYVDLVE…TSRAGDYIVR (260 aa)) folds into the MHD domain.

It belongs to the adaptor complexes medium subunit family. Adaptor protein complex 3 (AP-3) is a heterotetramer composed of 2 large adaptins (APL5 and APL6), a medium adaptin (APM3) and a small adaptin (APS3).

The protein resides in the golgi apparatus. The protein localises to the cytoplasmic vesicle membrane. Part of the AP-3 complex, an adaptor-related complex which is not clathrin-associated. The complex is associated with the Golgi region as well as more peripheral structures. It facilitates the budding of vesicles from the Golgi membrane and may be directly involved in trafficking to the vacuole. The polypeptide is AP-3 complex subunit mu (APM3) (Eremothecium gossypii (strain ATCC 10895 / CBS 109.51 / FGSC 9923 / NRRL Y-1056) (Yeast)).